Reading from the N-terminus, the 369-residue chain is Anhydro-N-acetylmuramic acid kinase (369 aa).

12-19 provides a ligand contact to ATP; that stretch reads GTSLDGVD.

It belongs to the anhydro-N-acetylmuramic acid kinase family.

It catalyses the reaction 1,6-anhydro-N-acetyl-beta-muramate + ATP + H2O = N-acetyl-D-muramate 6-phosphate + ADP + H(+). It participates in amino-sugar metabolism; 1,6-anhydro-N-acetylmuramate degradation. It functions in the pathway cell wall biogenesis; peptidoglycan recycling. Functionally, catalyzes the specific phosphorylation of 1,6-anhydro-N-acetylmuramic acid (anhMurNAc) with the simultaneous cleavage of the 1,6-anhydro ring, generating MurNAc-6-P. Is required for the utilization of anhMurNAc either imported from the medium or derived from its own cell wall murein, and thus plays a role in cell wall recycling. In Escherichia coli O157:H7, this protein is Anhydro-N-acetylmuramic acid kinase.